The following is a 709-amino-acid chain: G1/S-specific cyclin-E (709 aa).

Disordered stretches follow at residues 1 to 30 (MGLNAKSVCSTSSTEPNGSIVTTAPSNGEV), 43 to 149 (ISSS…NLSS), 162 to 205 (VDGQ…GSKQ), 221 to 289 (TVVT…PKHQ), and 642 to 709 (ALRA…RSNP). Composition is skewed to polar residues over residues 7-29 (SVCSTSSTEPNGSIVTTAPSNGE), 61-70 (PSTSFSSASQ), and 91-106 (CDSQNLAASTAATSNG). Phosphoserine occurs at positions 114, 115, 117, and 129. The segment covering 162 to 175 (VDGQSTQELLSIRS) has biased composition (polar residues). Phosphoserine occurs at positions 187, 192, 195, and 198. Residues 187–199 (SPLPDSPDSPPSP) show a composition bias toward pro residues. Residues 228–258 (EDDDLLDDSCEDYSYDEDDEDDVEEEDDDVE) are compositionally biased toward acidic residues. Residues 260–277 (YSSTISPASSGCSQQQAV) are compositionally biased toward polar residues. Thr-651 bears the Phosphothreonine mark. Low complexity predominate over residues 677-709 (SSTTTCCNTAASNKGGKSSSNNSVTSCSSRSNP).

This sequence belongs to the cyclin family. Cyclin E subfamily. In terms of assembly, interacts with a member of the CDK2/CDK protein kinases to form a serine/threonine kinase holoenzyme complex. The cyclin subunit imparts substrate specificity to the complex. Interacts (via C-terminus) with Z600 (via C-terminus). Isoform II is ubiquitous in early embryos and, prior to mitosis 14, is rapidly degraded in all cells except the pole (germ) cells. Expressed during G1 phase in proliferating peripheral nervous system cells. Constitutive expression in embryonic cycles lacking a G1 phase.

The protein resides in the nucleus. Its function is as follows. Essential for the control of the cell cycle at the G1/S (start) transition. Targeted by archipelago for degradation by the SFC ubiquitin ligase complex. The protein is G1/S-specific cyclin-E (CycE) of Drosophila melanogaster (Fruit fly).